The chain runs to 199 residues: LPICPSGAVNCQVSLRDLFDRAVILSHYIHNLSSEMFNEFDKRYAQGRGFITKAIDSCHTSSLQTPEDKEQAQQIHHEVLVSLILGVLRSWNDPLYHLVTEVRGMQEAPDAILSRAIQIEEENKRLLEGMEKIVGQVHPGVKENEVYSVWSGLPSLQMADEDTRLFAFYDLLHCLRRDSHKIDSYLKLLKCRIIYNSNC.

Cysteine 4 and cysteine 11 are disulfide-bonded. Phosphoserine occurs at positions 26, 34, and 90. 2 disulfide bridges follow: cysteine 58-cysteine 174 and cysteine 191-cysteine 199.

It belongs to the somatotropin/prolactin family. Interacts with PRLR.

The protein resides in the secreted. In terms of biological role, prolactin acts primarily on the mammary gland by promoting lactation. This chain is Prolactin (PRL), found in Balaenoptera borealis (Sei whale).